A 274-amino-acid chain; its full sequence is Large ribosomal subunit protein uL2 (274 aa).

Positions 224 to 254 (AMNPVDHPHGGGEGRTGEGQAPVSPWNTLTK) are disordered. A compositionally biased stretch (basic and acidic residues) spans 229 to 239 (DHPHGGGEGRT).

This sequence belongs to the universal ribosomal protein uL2 family. Part of the 50S ribosomal subunit. Forms a bridge to the 30S subunit in the 70S ribosome.

Functionally, one of the primary rRNA binding proteins. Required for association of the 30S and 50S subunits to form the 70S ribosome, for tRNA binding and peptide bond formation. It has been suggested to have peptidyltransferase activity; this is somewhat controversial. Makes several contacts with the 16S rRNA in the 70S ribosome. The sequence is that of Large ribosomal subunit protein uL2 from Leptothrix cholodnii (strain ATCC 51168 / LMG 8142 / SP-6) (Leptothrix discophora (strain SP-6)).